The chain runs to 437 residues: Minor fimbrial subunit HifE (437 aa).

The signal sequence occupies residues 1-30 (MNKKSYINHYLTLFKVTTLLFTLSSNPVWA).

This sequence belongs to the fimbrial protein family.

Its subcellular location is the fimbrium. In terms of biological role, may be a minor structural protein required for pilus biogenesis. May be the adhesive component in the pili. The sequence is that of Minor fimbrial subunit HifE (hifE) from Haemophilus influenzae.